The chain runs to 339 residues: Phenylalanine--tRNA ligase alpha subunit (339 aa).

Glu254 serves as a coordination point for Mg(2+).

This sequence belongs to the class-II aminoacyl-tRNA synthetase family. Phe-tRNA synthetase alpha subunit type 1 subfamily. As to quaternary structure, tetramer of two alpha and two beta subunits. Mg(2+) serves as cofactor.

The protein localises to the cytoplasm. The catalysed reaction is tRNA(Phe) + L-phenylalanine + ATP = L-phenylalanyl-tRNA(Phe) + AMP + diphosphate + H(+). This Lachnoclostridium phytofermentans (strain ATCC 700394 / DSM 18823 / ISDg) (Clostridium phytofermentans) protein is Phenylalanine--tRNA ligase alpha subunit.